The primary structure comprises 157 residues: Peptide methionine sulfoxide reductase MsrA (157 aa).

The active site involves cysteine 10.

It belongs to the MsrA Met sulfoxide reductase family.

The enzyme catalyses L-methionyl-[protein] + [thioredoxin]-disulfide + H2O = L-methionyl-(S)-S-oxide-[protein] + [thioredoxin]-dithiol. It carries out the reaction [thioredoxin]-disulfide + L-methionine + H2O = L-methionine (S)-S-oxide + [thioredoxin]-dithiol. Has an important function as a repair enzyme for proteins that have been inactivated by oxidation. Catalyzes the reversible oxidation-reduction of methionine sulfoxide in proteins to methionine. The polypeptide is Peptide methionine sulfoxide reductase MsrA (Clostridium botulinum (strain Kyoto / Type A2)).